The following is a 194-amino-acid chain: Endo-1,4-beta-xylanase (194 aa).

At Gly-1 the chain carries N-acetylglycine. In terms of domain architecture, GH11 spans 1–191; the sequence is GTTPNSEGWH…SSGYARITVA (191 aa). The active-site Nucleophile is Glu-86. Cys-110 and Cys-154 form a disulfide bridge. The Proton donor role is filled by Glu-178.

The protein belongs to the glycosyl hydrolase 11 (cellulase G) family.

It carries out the reaction Endohydrolysis of (1-&gt;4)-beta-D-xylosidic linkages in xylans.. The protein operates within glycan degradation; xylan degradation. This Byssochlamys spectabilis (Paecilomyces variotii) protein is Endo-1,4-beta-xylanase.